Consider the following 188-residue polypeptide: Probable DNA-directed RNA polymerase subunit delta (188 aa).

An HTH HARE-type domain is found at 14–81 (LSMIEVAHAL…GNNVWALRSW (68 aa)). A disordered region spans residues 96 to 188 (EIEDEEEEEK…EDDSDDTDED (93 aa)). Composition is skewed to acidic residues over residues 118–150 (IEDEIDPEDEEGTKETTEEDMSYDTQAEDEDKD) and 158–188 (ELAEVELDNVDEEVDIEVEDDEDDSDDTDED).

This sequence belongs to the RpoE family. As to quaternary structure, RNAP is composed of a core of 2 alpha, a beta and a beta' subunits. The core is associated with a delta subunit and one of several sigma factors.

Participates in both the initiation and recycling phases of transcription. In the presence of the delta subunit, RNAP displays an increased specificity of transcription, a decreased affinity for nucleic acids, and an increased efficiency of RNA synthesis because of enhanced recycling. The polypeptide is Probable DNA-directed RNA polymerase subunit delta (Lactococcus lactis subsp. cremoris (strain MG1363)).